We begin with the raw amino-acid sequence, 471 residues long: Trigger factor (471 aa).

Residues Gly169–Pro264 enclose the PPIase FKBP-type domain.

This sequence belongs to the FKBP-type PPIase family. Tig subfamily.

The protein localises to the cytoplasm. The catalysed reaction is [protein]-peptidylproline (omega=180) = [protein]-peptidylproline (omega=0). In terms of biological role, involved in protein export. Acts as a chaperone by maintaining the newly synthesized protein in an open conformation. Functions as a peptidyl-prolyl cis-trans isomerase. This Nostoc sp. (strain PCC 7120 / SAG 25.82 / UTEX 2576) protein is Trigger factor.